The following is a 236-amino-acid chain: MKIGIIGAMEPEVAHLIAAMTNASSQTIAGIEFIAGTLAGKDVVVTRSGIGKVAASIATTLLIEKYAPDAVINTGSAGGFVDSLSIGDIVISSEVRHHDVDVTAFGYEIGQMAQQPAAFIPAPYLVEAANKAIKQLGEVKAIEGLICTGDSFICDPVRTKTMLEHFPTMAACEMEGAAIAQVCHQFGMPFVVIRSLSDNANNDSPVDFDSYIVKAGYHSALMVMLLLEQLDPNSVK.

Residue Glu12 is the Proton acceptor of the active site. Substrate-binding positions include Gly78, Ile153, and 174–175 (ME). The active-site Proton donor is the Asp198.

The protein belongs to the PNP/UDP phosphorylase family. MtnN subfamily.

The catalysed reaction is S-adenosyl-L-homocysteine + H2O = S-(5-deoxy-D-ribos-5-yl)-L-homocysteine + adenine. The enzyme catalyses S-methyl-5'-thioadenosine + H2O = 5-(methylsulfanyl)-D-ribose + adenine. It carries out the reaction 5'-deoxyadenosine + H2O = 5-deoxy-D-ribose + adenine. It participates in amino-acid biosynthesis; L-methionine biosynthesis via salvage pathway; S-methyl-5-thio-alpha-D-ribose 1-phosphate from S-methyl-5'-thioadenosine (hydrolase route): step 1/2. Functionally, catalyzes the irreversible cleavage of the glycosidic bond in both 5'-methylthioadenosine (MTA) and S-adenosylhomocysteine (SAH/AdoHcy) to adenine and the corresponding thioribose, 5'-methylthioribose and S-ribosylhomocysteine, respectively. Also cleaves 5'-deoxyadenosine, a toxic by-product of radical S-adenosylmethionine (SAM) enzymes, into 5-deoxyribose and adenine. The protein is 5'-methylthioadenosine/S-adenosylhomocysteine nucleosidase of Shewanella sp. (strain MR-7).